The sequence spans 161 residues: Putative 4-hydroxy-4-methyl-2-oxoglutarate aldolase (161 aa).

Substrate contacts are provided by residues 75–78 (GDNL) and R97. D98 provides a ligand contact to a divalent metal cation.

The protein belongs to the class II aldolase/RraA-like family. Homotrimer. Requires a divalent metal cation as cofactor.

It carries out the reaction 4-hydroxy-4-methyl-2-oxoglutarate = 2 pyruvate. The catalysed reaction is oxaloacetate + H(+) = pyruvate + CO2. In terms of biological role, catalyzes the aldol cleavage of 4-hydroxy-4-methyl-2-oxoglutarate (HMG) into 2 molecules of pyruvate. Also contains a secondary oxaloacetate (OAA) decarboxylase activity due to the common pyruvate enolate transition state formed following C-C bond cleavage in the retro-aldol and decarboxylation reactions. The polypeptide is Putative 4-hydroxy-4-methyl-2-oxoglutarate aldolase (Alkalilimnicola ehrlichii (strain ATCC BAA-1101 / DSM 17681 / MLHE-1)).